The chain runs to 744 residues: 1,4-alpha-glucan branching enzyme GlgB (744 aa).

The disordered stretch occupies residues 1-23 (MSGPEDPADRRHGEVPAPRRDIP). Over residues 7 to 23 (PADRRHGEVPAPRRDIP) the composition is skewed to basic and acidic residues. Asp-424 serves as the catalytic Nucleophile. Glu-476 serves as the catalytic Proton donor.

Belongs to the glycosyl hydrolase 13 family. GlgB subfamily. In terms of assembly, monomer.

The catalysed reaction is Transfers a segment of a (1-&gt;4)-alpha-D-glucan chain to a primary hydroxy group in a similar glucan chain.. The protein operates within glycan biosynthesis; glycogen biosynthesis. In terms of biological role, catalyzes the formation of the alpha-1,6-glucosidic linkages in glycogen by scission of a 1,4-alpha-linked oligosaccharide from growing alpha-1,4-glucan chains and the subsequent attachment of the oligosaccharide to the alpha-1,6 position. In Nocardia farcinica (strain IFM 10152), this protein is 1,4-alpha-glucan branching enzyme GlgB.